The chain runs to 486 residues: UDP-N-acetylmuramate--L-alanine ligase (486 aa).

129 to 135 (GTHGKTT) contacts ATP.

Belongs to the MurCDEF family.

The protein localises to the cytoplasm. It carries out the reaction UDP-N-acetyl-alpha-D-muramate + L-alanine + ATP = UDP-N-acetyl-alpha-D-muramoyl-L-alanine + ADP + phosphate + H(+). The protein operates within cell wall biogenesis; peptidoglycan biosynthesis. Its function is as follows. Cell wall formation. The protein is UDP-N-acetylmuramate--L-alanine ligase of Vibrio cholerae serotype O1 (strain ATCC 39315 / El Tor Inaba N16961).